The chain runs to 225 residues: Fibroblast growth factor 11 (225 aa).

The tract at residues 1–28 (MAALASSLIRQKREVREPGGSRPVSAQR) is disordered.

This sequence belongs to the heparin-binding growth factors family. In terms of tissue distribution, brain and eye, and in a segmental pattern of the embryonic body wall. In adult olfactory bulb, hippocampus and most concentrated in Purkinje cell layer of the cerebellum.

The protein localises to the nucleus. Its function is as follows. Probably involved in nervous system development and function. This is Fibroblast growth factor 11 (Fgf11) from Mus musculus (Mouse).